Consider the following 393-residue polypeptide: Prokineticin receptor 1 (393 aa).

Residues 1 to 63 lie on the Extracellular side of the membrane; sequence MEITMGVMDE…NSRTFFAAKI (63 aa). N-linked (GlcNAc...) asparagine glycans are attached at residues Asn11, Asn14, and Asn36. The helical transmembrane segment at 64 to 84 threads the bilayer; it reads VIGMALVGIMLVCGIGNFIFI. Residues 85–98 are Cytoplasmic-facing; that stretch reads AALARYKKLRNLTN. The helical transmembrane segment at 99–119 threads the bilayer; that stretch reads LLIANLAISDFLVAIVCCPFE. The Extracellular portion of the chain corresponds to 120–145; the sequence is MDYYVVRQLSWEHGHVLCASVNYLRT. Cys137 and Cys217 are joined by a disulfide. The chain crosses the membrane as a helical span at residues 146-166; the sequence is VSLYVSTNALLAIAIDRYLAI. The Cytoplasmic segment spans residues 167 to 179; the sequence is VHPLRPRMKYQTA. A helical transmembrane segment spans residues 180–200; the sequence is TGLIALVWVVSILVAIPSAYF. The Extracellular segment spans residues 201–232; sequence TTETVLVIVKSQEKIFCGQIWPVDQQIYYKSY. A helical transmembrane segment spans residues 233 to 253; the sequence is FLFIFGIEFVGPVVTMTLCYA. Residues 254-282 lie on the Cytoplasmic side of the membrane; sequence RISRELWFKAVPGFQTEQIRKRLRCRRKT. A helical membrane pass occupies residues 283–303; that stretch reads VLVLMCILTAYVLCWAPFYGF. The Extracellular portion of the chain corresponds to 304–322; the sequence is AIVRDFFPTVFVKEKHYLT. The chain crosses the membrane as a helical span at residues 323 to 343; it reads AFYVVECIAMSNSMINTVCFV. At 344-393 the chain is on the cytoplasmic side; sequence TVKNNTIKYFKKIMLLHWKASYNGSKSSGDLDLKTTGVPATEEVDCIGLK.

It belongs to the G-protein coupled receptor 1 family.

The protein resides in the cell membrane. In terms of biological role, receptor for prokineticin 1. Exclusively coupled to the G(q) subclass of heteromeric G proteins. Activation leads to mobilization of calcium, stimulation of phosphoinositide turnover and activation of p44/p42 mitogen-activated protein kinase. May play a role during early pregnancy. The chain is Prokineticin receptor 1 (PROKR1) from Bos taurus (Bovine).